A 225-amino-acid chain; its full sequence is THAP domain-containing protein 1 B (225 aa).

Residues 5–57 (CSAYGCKNRYDKDRPISFHKFPLKRPLLCKKWEAAVRRADFKPTKYSSICSDH) form a THAP-type zinc finger. The stretch at 139–194 (VEDTVHQRRRIQQLEEQVDKLRKKLKIANQKCRRQERSLEKLEKEVSEYREAKGSG) forms a coiled coil.

This sequence belongs to the THAP1 family.

The protein localises to the nucleus. It localises to the nucleoplasm. In terms of biological role, DNA-binding transcription regulator that regulates endothelial cell proliferation and G1/S cell-cycle progression. Specifically binds the 5'-[AT]NTNN[GT]GGCA[AGT]-3' core DNA sequence and acts by modulating expression of pRB-E2F cell-cycle target genes. The chain is THAP domain-containing protein 1 B (thap1-b) from Xenopus laevis (African clawed frog).